The chain runs to 817 residues: Phosphoenolpyruvate synthase (817 aa).

Catalysis depends on His-442, which acts as the Tele-phosphohistidine intermediate. Substrate-binding residues include Arg-540, Arg-587, Glu-684, Gly-706, Thr-707, Asn-708, and Asp-709. Glu-684 is a Mg(2+) binding site. Asp-709 is a Mg(2+) binding site. The active-site Proton donor is Cys-756.

It belongs to the PEP-utilizing enzyme family. Homooctamer. Mg(2+) serves as cofactor.

The enzyme catalyses pyruvate + ATP + H2O = phosphoenolpyruvate + AMP + phosphate + 2 H(+). Its pathway is carbohydrate biosynthesis; gluconeogenesis. In terms of biological role, catalyzes the phosphorylation of pyruvate to phosphoenolpyruvate. This is Phosphoenolpyruvate synthase (ppsA) from Pyrococcus furiosus (strain ATCC 43587 / DSM 3638 / JCM 8422 / Vc1).